The primary structure comprises 432 residues: MRPWALAVTRWPPSAPVGQRRFSAGPGSTPGQLWGSPGLEGPLASPPARDERLPSQQPPSRPPHLPVEERRASAPAGGSPRMLHPATQQSPFMVDLHEQVHQGPVPLSYTVTTVTTQGFPLPTGQHIPGCSAQQLPACSVMFSGQHYPLCCLPPPLIQACTMQQLPVPYQAYPHLISSDHYILHPPPPAPPPQPTHMAPLGQFVSLQTQHPRMPLQRLDNDVDLRGDQPSLGSFTYSTSAPGPALSPSVPLHYLPHDPLHQELSFGVPYSHMMPRRLSTQRYRLQQPLPPPPPPPPPPPYYPSFLPYFLSMLPMSPTAMGPTISLDLDVDDVEMENYEALLNLAERLGDAKPRGLTKADIEQLPSYRFNPDSHQSEQTLCVVCFSDFEARQLLRVLPCNHEFHTKCVDKWLKANRTCPICRADASEVPREAE.

The tract at residues Met-1–Ala-86 is disordered. A compositionally biased stretch (pro residues) spans Gln-56 to Leu-65. An RING-type; atypical zinc finger spans residues Cys-380–Arg-421.

This chain is RING finger protein 44 (RNF44), found in Homo sapiens (Human).